Here is an 804-residue protein sequence, read N- to C-terminus: Leucine--tRNA ligase (804 aa).

Positions 39–50 (PYPSGKGLHVGH) match the 'HIGH' region motif. Positions 573–577 (KMSKS) match the 'KMSKS' region motif. Lys-576 contributes to the ATP binding site.

Belongs to the class-I aminoacyl-tRNA synthetase family.

It is found in the cytoplasm. The catalysed reaction is tRNA(Leu) + L-leucine + ATP = L-leucyl-tRNA(Leu) + AMP + diphosphate. This Lactobacillus delbrueckii subsp. bulgaricus (strain ATCC BAA-365 / Lb-18) protein is Leucine--tRNA ligase.